Here is a 113-residue protein sequence, read N- to C-terminus: MAQSPAAASPGAPEQGCPIRVEHDRRRRQFTVRLNGCHDRAVLLYEYVGKRIVDLQHTEVPDAYRGRGIAKHLAKAALDFVVEEDLRAHVTCWYIQKFVKENPLPQYLERLQP.

Low complexity predominate over residues 1-16; sequence MAQSPAAASPGAPEQG. Positions 1-20 are disordered; the sequence is MAQSPAAASPGAPEQGCPIR. An N-acetyltransferase domain is found at 22 to 112; sequence EHDRRRRQFT…PLPQYLERLQ (91 aa).

This sequence belongs to the NATD1 family.

This chain is Protein NATD1 (NATD1), found in Bos taurus (Bovine).